The primary structure comprises 280 residues: Phosphatidylserine decarboxylase proenzyme (280 aa).

Active-site charge relay system; for autoendoproteolytic cleavage activity residues include Asp86, His143, and Ser246. The Schiff-base intermediate with substrate; via pyruvic acid; for decarboxylase activity role is filled by Ser246. At Ser246 the chain carries Pyruvic acid (Ser); by autocatalysis.

It belongs to the phosphatidylserine decarboxylase family. PSD-B subfamily. Prokaryotic type I sub-subfamily. In terms of assembly, heterodimer of a large membrane-associated beta subunit and a small pyruvoyl-containing alpha subunit. Pyruvate is required as a cofactor. Is synthesized initially as an inactive proenzyme. Formation of the active enzyme involves a self-maturation process in which the active site pyruvoyl group is generated from an internal serine residue via an autocatalytic post-translational modification. Two non-identical subunits are generated from the proenzyme in this reaction, and the pyruvate is formed at the N-terminus of the alpha chain, which is derived from the carboxyl end of the proenzyme. The autoendoproteolytic cleavage occurs by a canonical serine protease mechanism, in which the side chain hydroxyl group of the serine supplies its oxygen atom to form the C-terminus of the beta chain, while the remainder of the serine residue undergoes an oxidative deamination to produce ammonia and the pyruvoyl prosthetic group on the alpha chain. During this reaction, the Ser that is part of the protease active site of the proenzyme becomes the pyruvoyl prosthetic group, which constitutes an essential element of the active site of the mature decarboxylase.

The protein resides in the cell membrane. The catalysed reaction is a 1,2-diacyl-sn-glycero-3-phospho-L-serine + H(+) = a 1,2-diacyl-sn-glycero-3-phosphoethanolamine + CO2. The protein operates within phospholipid metabolism; phosphatidylethanolamine biosynthesis; phosphatidylethanolamine from CDP-diacylglycerol: step 2/2. In terms of biological role, catalyzes the formation of phosphatidylethanolamine (PtdEtn) from phosphatidylserine (PtdSer). The sequence is that of Phosphatidylserine decarboxylase proenzyme from Brevibacillus brevis (strain 47 / JCM 6285 / NBRC 100599).